The following is a 361-amino-acid chain: Isocitrate dehydrogenase [NAD] subunit 1, mitochondrial (361 aa).

Residues Met1 to Ser12 constitute a mitochondrion transit peptide. Positions 110, 141, and 229 each coordinate substrate. Residue Asp229 coordinates Mg(2+).

This sequence belongs to the isocitrate and isopropylmalate dehydrogenases family. In terms of assembly, octamer of two non-identical subunits IDH1 and IDH2. It depends on Mg(2+) as a cofactor. The cofactor is Mn(2+).

It is found in the mitochondrion. It catalyses the reaction D-threo-isocitrate + NAD(+) = 2-oxoglutarate + CO2 + NADH. Its function is as follows. Performs an essential role in the oxidative function of the citric acid cycle. The polypeptide is Isocitrate dehydrogenase [NAD] subunit 1, mitochondrial (IDH1) (Kluyveromyces lactis (strain ATCC 8585 / CBS 2359 / DSM 70799 / NBRC 1267 / NRRL Y-1140 / WM37) (Yeast)).